The chain runs to 114 residues: Small ribosomal subunit protein bS6 (114 aa).

The protein belongs to the bacterial ribosomal protein bS6 family.

Binds together with bS18 to 16S ribosomal RNA. In Thermosynechococcus vestitus (strain NIES-2133 / IAM M-273 / BP-1), this protein is Small ribosomal subunit protein bS6.